The sequence spans 314 residues: F-box protein AUF2 (314 aa).

In terms of domain architecture, F-box spans 1 to 49 (MDVFDGLPDPIIVDILNKVGDVKTLLRCSSLSKRFNSLVPQSESLTLRL).

Part of a SCF (ASK-cullin-F-box) protein ligase complex.

Its subcellular location is the nucleus. Its pathway is protein modification; protein ubiquitination. Functionally, component of SCF(ASK-cullin-F-box) E3 ubiquitin ligase complexes, which may mediate the ubiquitination and subsequent proteasomal degradation of target proteins. The polypeptide is F-box protein AUF2 (Arabidopsis thaliana (Mouse-ear cress)).